We begin with the raw amino-acid sequence, 118 residues long: Ribonuclease P protein component (118 aa).

This sequence belongs to the RnpA family. In terms of assembly, consists of a catalytic RNA component (M1 or rnpB) and a protein subunit.

It catalyses the reaction Endonucleolytic cleavage of RNA, removing 5'-extranucleotides from tRNA precursor.. In terms of biological role, RNaseP catalyzes the removal of the 5'-leader sequence from pre-tRNA to produce the mature 5'-terminus. It can also cleave other RNA substrates such as 4.5S RNA. The protein component plays an auxiliary but essential role in vivo by binding to the 5'-leader sequence and broadening the substrate specificity of the ribozyme. This Mycoplasma pneumoniae (strain ATCC 29342 / M129 / Subtype 1) (Mycoplasmoides pneumoniae) protein is Ribonuclease P protein component.